Reading from the N-terminus, the 241-residue chain is Adapter protein MecA (241 aa).

The tract at residues 115 to 141 (TDSNDKNNDDSSYMSDGNPADLNGYAN) is disordered.

It belongs to the MecA family. As to quaternary structure, homodimer.

Enables the recognition and targeting of unfolded and aggregated proteins to the ClpC protease or to other proteins involved in proteolysis. This chain is Adapter protein MecA, found in Pediococcus pentosaceus (strain ATCC 25745 / CCUG 21536 / LMG 10740 / 183-1w).